The primary structure comprises 1171 residues: Structural maintenance of chromosomes protein 2-2 (1171 aa).

In terms of domain architecture, Zinc-hook spans 2–1158 (HIKEICLEGF…DVLFRTKFVD (1157 aa)). 32-39 (GLNGSGKS) provides a ligand contact to ATP. A coiled-coil region spans residues 172-510 (RMYENKKEAA…LANVQFTYRD (339 aa)). An SMC hinge domain is found at 518-635 (SKVKGVVAKL…KTTDAAKEVA (118 aa)). Positions 674 to 1026 (HDLAEAETKF…LDEKKKETLK (353 aa)) form a coiled coil.

It belongs to the SMC family. SMC2 subfamily. In terms of assembly, forms a heterodimer with SMC4. Component of the condensin complex, which contains the SMC2 and SMC4 heterodimer, and three non SMC subunits that probably regulate the complex: CAPH, CAPD2 and CAPG. In terms of tissue distribution, highly expressed in roots and young floral buds.

It localises to the nucleus. In terms of biological role, central component of the condensin complex, a complex required for conversion of interphase chromatin into mitotic-like condense chromosomes. The condensin complex probably introduces positive supercoils into relaxed DNA in the presence of type I topoisomerases and converts nicked DNA into positive knotted forms in the presence of type II topoisomerases. Also involved in chromosome segregation in meiosis. The sequence is that of Structural maintenance of chromosomes protein 2-2 (SMC2-2) from Arabidopsis thaliana (Mouse-ear cress).